Reading from the N-terminus, the 78-residue chain is Surfactant-associated protein 2 (78 aa).

Residues 1 to 19 (MGAGLPLVLLLTLVGSSQG) form the signal peptide. N-linked (GlcNAc...) asparagine glycosylation is present at Asn-37.

Post-translationally, N-glycosylated.

Its subcellular location is the secreted. The protein localises to the cytoplasmic vesicle. It localises to the secretory vesicle. The protein resides in the golgi apparatus. Its function is as follows. Putative surfactant protein. This Bos taurus (Bovine) protein is Surfactant-associated protein 2 (SFTA2).